Consider the following 391-residue polypeptide: 3-ketoacyl-CoA thiolase (391 aa).

The active-site Acyl-thioester intermediate is cysteine 95. Catalysis depends on proton acceptor residues histidine 347 and cysteine 377.

Belongs to the thiolase-like superfamily. Thiolase family. Heterotetramer of two alpha chains (FadB) and two beta chains (FadA).

It is found in the cytoplasm. It catalyses the reaction an acyl-CoA + acetyl-CoA = a 3-oxoacyl-CoA + CoA. Its pathway is lipid metabolism; fatty acid beta-oxidation. In terms of biological role, catalyzes the final step of fatty acid oxidation in which acetyl-CoA is released and the CoA ester of a fatty acid two carbons shorter is formed. This Hahella chejuensis (strain KCTC 2396) protein is 3-ketoacyl-CoA thiolase.